The sequence spans 194 residues: Thymidine kinase (194 aa).

Residues 9-16 (GAMNSGKT) and 85-88 (DECQ) contribute to the ATP site. Residue Glu86 is the Proton acceptor of the active site. The Zn(2+) site is built by Cys143, Cys146, Cys180, and His183.

It belongs to the thymidine kinase family. In terms of assembly, homotetramer.

The protein localises to the cytoplasm. The catalysed reaction is thymidine + ATP = dTMP + ADP + H(+). This chain is Thymidine kinase, found in Enterococcus faecalis (strain ATCC 700802 / V583).